The chain runs to 21 residues: 71 kDa F-actin-binding protein (21 aa).

To yeast fimbrin. Post-translationally, the N-terminus is blocked.

Binds directly to F-actin and induces actin filament bundling. May function as a regulator of actin filament organization. The sequence is that of 71 kDa F-actin-binding protein from Tetrahymena pyriformis.